We begin with the raw amino-acid sequence, 135 residues long: Probable histone H2A.2 (135 aa).

Belongs to the histone H2A family. The nucleosome is a histone octamer containing two molecules each of H2A, H2B, H3 and H4 assembled in one H3-H4 heterotetramer and two H2A-H2B heterodimers. The octamer wraps approximately 147 bp of DNA.

It localises to the nucleus. The protein localises to the chromosome. Its function is as follows. Core component of nucleosome. Nucleosomes wrap and compact DNA into chromatin, limiting DNA accessibility to the cellular machineries which require DNA as a template. Histones thereby play a central role in transcription regulation, DNA repair, DNA replication and chromosomal stability. DNA accessibility is regulated via a complex set of post-translational modifications of histones, also called histone code, and nucleosome remodeling. This is Probable histone H2A.2 from Oryza sativa subsp. indica (Rice).